Reading from the N-terminus, the 107-residue chain is Large ribosomal subunit protein uL24 (107 aa).

It belongs to the universal ribosomal protein uL24 family. Part of the 50S ribosomal subunit.

Its function is as follows. One of two assembly initiator proteins, it binds directly to the 5'-end of the 23S rRNA, where it nucleates assembly of the 50S subunit. One of the proteins that surrounds the polypeptide exit tunnel on the outside of the subunit. The polypeptide is Large ribosomal subunit protein uL24 (Nitratidesulfovibrio vulgaris (strain DSM 19637 / Miyazaki F) (Desulfovibrio vulgaris)).